Reading from the N-terminus, the 381-residue chain is Anti-sigma-I factor RsgI (381 aa).

The Cytoplasmic portion of the chain corresponds to 1–63 (MRRGIIVEKN…FDFFKLRPFK (63 aa)). Residues 2 to 50 (RRGIIVEKNKKFVTLLTPDGQFLKAKNDRHSYEIGEEIMLPSETRMGRR) form the RsgI N-terminal anti-sigma domain. Residues 64–84 (MGIFTMTAIMLFIFIVLPVFS) traverse the membrane as a helical segment. Residues 85–381 (NNKAYAYMTI…NEDSPSAPGE (297 aa)) are Extracellular-facing. A disordered region spans residues 198–381 (SDMQTREKAK…NEDSPSAPGE (184 aa)). Composition is skewed to basic and acidic residues over residues 200-210 (MQTREKAKKEG), 219-244 (SNEK…QKSD), 273-321 (GDQK…DKGN), and 349-359 (SRRDNASDRRN).

Interacts (via RsgI N-terminal anti-sigma domain) with SigI.

It is found in the cell membrane. Anti-sigma factor for SigI. Negatively regulates SigI activity through direct interaction. In Bacillus subtilis (strain 168), this protein is Anti-sigma-I factor RsgI.